A 63-amino-acid chain; its full sequence is Large ribosomal subunit protein uL29 (63 aa).

Belongs to the universal ribosomal protein uL29 family.

The chain is Large ribosomal subunit protein uL29 from Shewanella halifaxensis (strain HAW-EB4).